The chain runs to 341 residues: tRNA N6-adenosine threonylcarbamoyltransferase (341 aa).

H113 and H117 together coordinate Fe cation. Residues 136-140, D169, G182, and N280 contribute to the substrate site; that span reads IISGG. Residue D308 participates in Fe cation binding.

The protein belongs to the KAE1 / TsaD family. It depends on Fe(2+) as a cofactor.

Its subcellular location is the cytoplasm. It catalyses the reaction L-threonylcarbamoyladenylate + adenosine(37) in tRNA = N(6)-L-threonylcarbamoyladenosine(37) in tRNA + AMP + H(+). In terms of biological role, required for the formation of a threonylcarbamoyl group on adenosine at position 37 (t(6)A37) in tRNAs that read codons beginning with adenine. Is involved in the transfer of the threonylcarbamoyl moiety of threonylcarbamoyl-AMP (TC-AMP) to the N6 group of A37, together with TsaE and TsaB. TsaD likely plays a direct catalytic role in this reaction. This chain is tRNA N6-adenosine threonylcarbamoyltransferase, found in Anaplasma marginale (strain St. Maries).